The following is a 138-amino-acid chain: Large ribosomal subunit protein uL11c (138 aa).

Belongs to the universal ribosomal protein uL11 family. As to quaternary structure, part of the ribosomal stalk of the 50S ribosomal subunit. Interacts with L10 and the large rRNA to form the base of the stalk. L10 forms an elongated spine to which L12 dimers bind in a sequential fashion forming a multimeric L10(L12)X complex.

The protein resides in the plastid. The protein localises to the chloroplast. Its function is as follows. Forms part of the ribosomal stalk which helps the ribosome interact with GTP-bound translation factors. This Cyanidioschyzon merolae (strain NIES-3377 / 10D) (Unicellular red alga) protein is Large ribosomal subunit protein uL11c.